The primary structure comprises 177 residues: Bifunctional protein PyrR (177 aa).

The PRPP-binding motif lies at Ile-98 to Thr-110.

This sequence belongs to the purine/pyrimidine phosphoribosyltransferase family. PyrR subfamily. As to quaternary structure, homodimer and homohexamer; in equilibrium.

The catalysed reaction is UMP + diphosphate = 5-phospho-alpha-D-ribose 1-diphosphate + uracil. Functionally, regulates transcriptional attenuation of the pyrimidine nucleotide (pyr) operon by binding in a uridine-dependent manner to specific sites on pyr mRNA. This disrupts an antiterminator hairpin in the RNA and favors formation of a downstream transcription terminator, leading to a reduced expression of downstream genes. Its function is as follows. Also displays a weak uracil phosphoribosyltransferase activity which is not physiologically significant. The protein is Bifunctional protein PyrR of Clostridium kluyveri (strain ATCC 8527 / DSM 555 / NBRC 12016 / NCIMB 10680 / K1).